Consider the following 130-residue polypeptide: Universal stress protein MSMEG_4207 (130 aa).

Lys-104 bears the N6-acetyllysine mark.

It belongs to the universal stress protein A family. Post-translationally, acetylated on Lys-104 by PatA in the presence of acetyl-CoA as an acetyl donor.

This chain is Universal stress protein MSMEG_4207, found in Mycolicibacterium smegmatis (strain ATCC 700084 / mc(2)155) (Mycobacterium smegmatis).